Reading from the N-terminus, the 98-residue chain is Probable sodium channel toxin Ts27 (98 aa).

The first 22 residues, 1-22, serve as a signal peptide directing secretion; the sequence is MYNMVSLFIVAVLLLTYANVEG. 4 disulfide bridges follow: cysteine 36/cysteine 88, cysteine 40/cysteine 63, cysteine 49/cysteine 68, and cysteine 53/cysteine 70.

This sequence belongs to the long (4 C-C) scorpion toxin superfamily. Sodium channel inhibitor family. Expressed by the venom gland.

Its subcellular location is the secreted. Functionally, probable sodium channel toxin. The protein is Probable sodium channel toxin Ts27 of Tityus serrulatus (Brazilian scorpion).